Here is a 529-residue protein sequence, read N- to C-terminus: Tyrosinase (529 aa).

An N-terminal signal peptide occupies residues M1 to G18. Topologically, residues H19–S476 are lumenal, melanosome. 3 N-linked (GlcNAc...) asparagine glycosylation sites follow: N86, N111, and N161. Cu cation is bound by residues H180, H202, and H211. An N-linked (GlcNAc...) asparagine glycan is attached at N230. Residues S287–P313 form a disordered region. N337 carries an N-linked (GlcNAc...) asparagine glycan. H363 and H367 together coordinate Cu cation. N371 carries an N-linked (GlcNAc...) asparagine glycan. Residue H390 participates in Cu cation binding. A helical transmembrane segment spans residues W477–S497. Topologically, residues L498 to L529 are cytoplasmic.

This sequence belongs to the tyrosinase family. As to quaternary structure, forms an OPN3-dependent complex with DCT in response to blue light in melanocytes. The cofactor is Cu(2+). In terms of processing, glycosylated.

The protein localises to the melanosome membrane. Its subcellular location is the melanosome. The enzyme catalyses 2 L-dopa + O2 = 2 L-dopaquinone + 2 H2O. The catalysed reaction is L-tyrosine + O2 = L-dopaquinone + H2O. It carries out the reaction 2 5,6-dihydroxyindole-2-carboxylate + O2 = 2 indole-5,6-quinone-2-carboxylate + 2 H2O. Its function is as follows. This is a copper-containing oxidase that functions in the formation of pigments such as melanins and other polyphenolic compounds. Catalyzes the initial and rate limiting step in the cascade of reactions leading to melanin production from tyrosine. In addition to hydroxylating tyrosine to DOPA (3,4-dihydroxyphenylalanine), also catalyzes the oxidation of DOPA to DOPA-quinone, and possibly the oxidation of DHI (5,6-dihydroxyindole) to indole-5,6 quinone. This chain is Tyrosinase (TYR), found in Gorilla gorilla gorilla (Western lowland gorilla).